A 295-amino-acid polypeptide reads, in one-letter code: Glycine--tRNA ligase alpha subunit (295 aa).

The protein belongs to the class-II aminoacyl-tRNA synthetase family. As to quaternary structure, tetramer of two alpha and two beta subunits.

The protein resides in the cytoplasm. The enzyme catalyses tRNA(Gly) + glycine + ATP = glycyl-tRNA(Gly) + AMP + diphosphate. This Shouchella clausii (strain KSM-K16) (Alkalihalobacillus clausii) protein is Glycine--tRNA ligase alpha subunit.